A 286-amino-acid chain; its full sequence is Light-independent protochlorophyllide reductase iron-sulfur ATP-binding protein (286 aa).

ATP is bound by residues 10-15 and Lys-39; that span reads GIGKST. Ser-14 is a binding site for Mg(2+). 2 residues coordinate [4Fe-4S] cluster: Cys-95 and Cys-129. 180–181 contacts ATP; it reads NR.

Belongs to the NifH/BchL/ChlL family. As to quaternary structure, homodimer. Protochlorophyllide reductase is composed of three subunits; ChlL, ChlN and ChlB. [4Fe-4S] cluster serves as cofactor.

The catalysed reaction is chlorophyllide a + oxidized 2[4Fe-4S]-[ferredoxin] + 2 ADP + 2 phosphate = protochlorophyllide a + reduced 2[4Fe-4S]-[ferredoxin] + 2 ATP + 2 H2O. It participates in porphyrin-containing compound metabolism; chlorophyll biosynthesis (light-independent). Its function is as follows. Component of the dark-operative protochlorophyllide reductase (DPOR) that uses Mg-ATP and reduced ferredoxin to reduce ring D of protochlorophyllide (Pchlide) to form chlorophyllide a (Chlide). This reaction is light-independent. The L component serves as a unique electron donor to the NB-component of the complex, and binds Mg-ATP. The polypeptide is Light-independent protochlorophyllide reductase iron-sulfur ATP-binding protein (Leptolyngbya boryana (Plectonema boryanum)).